Here is a 98-residue protein sequence, read N- to C-terminus: Integration host factor subunit beta (98 aa).

It belongs to the bacterial histone-like protein family. Heterodimer of an alpha and a beta chain.

This protein is one of the two subunits of integration host factor, a specific DNA-binding protein that functions in genetic recombination as well as in transcriptional and translational control. The protein is Integration host factor subunit beta of Pseudomonas fluorescens (strain Pf0-1).